The following is a 463-amino-acid chain: Glycine--tRNA ligase (463 aa).

The substrate site is built by Arg-98 and Glu-174. Residues 206-208, 216-221, 290-291, and 334-337 each bind ATP; these read RNE, FRTREF, EL, and GADR. Residue 221-225 participates in substrate binding; it reads FEQME. Position 330 to 334 (330 to 334) interacts with substrate; the sequence is EPSLG.

It belongs to the class-II aminoacyl-tRNA synthetase family. Homodimer.

Its subcellular location is the cytoplasm. The catalysed reaction is tRNA(Gly) + glycine + ATP = glycyl-tRNA(Gly) + AMP + diphosphate. Catalyzes the attachment of glycine to tRNA(Gly). This chain is Glycine--tRNA ligase, found in Staphylococcus saprophyticus subsp. saprophyticus (strain ATCC 15305 / DSM 20229 / NCIMB 8711 / NCTC 7292 / S-41).